We begin with the raw amino-acid sequence, 299 residues long: METKTAKILDGKTLAEKIQKELTAQIIEVQAKIGRPPGLAVLMVGDNPASAAYVRNKEKSCAKVGIASFGKHFPQETSQKELEDVIAALNQDEQVDGILVQLPLPEHLDAVKLLHQIEPDKDADGLHPVNLGRLVRGEKGLRSCTPAGVMRLLAEYEISLRGKQAVVVGRSILVGKPMALMLLEADATVTIAHSRSQDLKSITQNADILVAAAGLPGLITADMVKPGAVVVDVGINRVTDANGKSRLVGDINFASIAGVAEYITPVPGGIGPMTVALLLQNTVTSYLQTAKESGALDVK.

Residues 169-171, Ser194, and Ile235 each bind NADP(+); that span reads GRS.

The protein belongs to the tetrahydrofolate dehydrogenase/cyclohydrolase family. As to quaternary structure, homodimer.

It catalyses the reaction (6R)-5,10-methylene-5,6,7,8-tetrahydrofolate + NADP(+) = (6R)-5,10-methenyltetrahydrofolate + NADPH. The enzyme catalyses (6R)-5,10-methenyltetrahydrofolate + H2O = (6R)-10-formyltetrahydrofolate + H(+). The protein operates within one-carbon metabolism; tetrahydrofolate interconversion. Its function is as follows. Catalyzes the oxidation of 5,10-methylenetetrahydrofolate to 5,10-methenyltetrahydrofolate and then the hydrolysis of 5,10-methenyltetrahydrofolate to 10-formyltetrahydrofolate. This Trichormus variabilis (strain ATCC 29413 / PCC 7937) (Anabaena variabilis) protein is Bifunctional protein FolD.